We begin with the raw amino-acid sequence, 111 residues long: Class I hydrophobin SC4 (111 aa).

A signal peptide spans 1 to 25 (MRFSLALLALPALAAAAPVPGGGKG). 4 disulfides stabilise this stretch: Cys-30–Cys-37, Cys-38–Cys-72, Cys-86–Cys-92, and Cys-93–Cys-106. Asn-39 is a glycosylation site (N-linked (GlcNAc...) asparagine).

The protein belongs to the fungal hydrophobin family. In terms of assembly, self-assembles to form functional amyloid fibrils called rodlets. Self-assembly into fibrillar rodlets occurs spontaneously at hydrophobic:hydrophilic interfaces and the rodlets further associate laterally to form amphipathic monolayers.

The protein localises to the secreted. Its subcellular location is the cell wall. In terms of biological role, aerial growth, conidiation, and dispersal of filamentous fungi in the environment rely upon a capability of their secreting small amphipathic proteins called hydrophobins (HPBs) with low sequence identity. Class I can self-assemble into an outermost layer of rodlet bundles on aerial cell surfaces, conferring cellular hydrophobicity that supports fungal growth, development and dispersal; whereas Class II form highly ordered films at water-air interfaces through intermolecular interactions but contribute nothing to the rodlet structure. SC4 is a dikaryon-specific class I hydrophobin that contributes to the formation of aerial hyphae and fruiting bodies. Plays a role within fruiting bodies by preventing gas channels filling with water under wet conditions, probably serving uninterrupted gas exchange. SC4 cannot fully substitute for SC3. Involved in the unusual characteristic of mounds to adhere to and completely envelop adjacent fruiting bodies on mosaic colonies. In Schizophyllum commune (Split gill fungus), this protein is Class I hydrophobin SC4.